The sequence spans 364 residues: Putative zinc metalloprotease all3971 (364 aa).

H17 lines the Zn(2+) pocket. The active site involves E18. H21 is a binding site for Zn(2+). A run of 3 helical transmembrane segments spans residues 92–114 (AIVI…LAQV), 281–303 (LFFF…LPAL), and 329–346 (VMQT…FLIV). Positions 103–188 (LIFAYMLLLA…KSIQLTVARG (86 aa)) constitute a PDZ domain.

This sequence belongs to the peptidase M50B family. Requires Zn(2+) as cofactor.

The protein resides in the cell inner membrane. The chain is Putative zinc metalloprotease all3971 from Nostoc sp. (strain PCC 7120 / SAG 25.82 / UTEX 2576).